Reading from the N-terminus, the 185-residue chain is Bcl-2-modifying factor (185 aa).

The interval 1 to 28 (MEPPQCVEELEDDVFQSEDGEPGTQPGG) is disordered. Residues 8–21 (EELEDDVFQSEDGE) show a composition bias toward acidic residues. The interval 67-75 (DKATQTLSP) is interaction with DLC2. Residues 134-148 (IARKLQCIADQFHRL) carry the BH3 motif.

The protein belongs to the Bcl-2 family. In terms of assembly, interacts with MCL1, BCL2, BCL2L1/BCL-Xl, BCL2A1 and BCL2L2/BCL-w. Interacts with the myosin V actin motor complex through its binding to DLC2. In terms of tissue distribution, widely expressed with an abundant expression in pancreas, liver kidney and hematopoietic tissues.

In terms of biological role, may play a role in apoptosis. In Mus musculus (Mouse), this protein is Bcl-2-modifying factor (Bmf).